Here is a 423-residue protein sequence, read N- to C-terminus: Serine hydroxymethyltransferase (423 aa).

(6S)-5,6,7,8-tetrahydrofolate-binding positions include L120 and 124–126 (GHL). K229 carries the N6-(pyridoxal phosphate)lysine modification. Residues E245 and 353-355 (SPF) contribute to the (6S)-5,6,7,8-tetrahydrofolate site.

Belongs to the SHMT family. In terms of assembly, homodimer. Pyridoxal 5'-phosphate serves as cofactor.

It localises to the cytoplasm. It carries out the reaction (6R)-5,10-methylene-5,6,7,8-tetrahydrofolate + glycine + H2O = (6S)-5,6,7,8-tetrahydrofolate + L-serine. It participates in one-carbon metabolism; tetrahydrofolate interconversion. The protein operates within amino-acid biosynthesis; glycine biosynthesis; glycine from L-serine: step 1/1. Its function is as follows. Catalyzes the reversible interconversion of serine and glycine with tetrahydrofolate (THF) serving as the one-carbon carrier. This reaction serves as the major source of one-carbon groups required for the biosynthesis of purines, thymidylate, methionine, and other important biomolecules. Also exhibits THF-independent aldolase activity toward beta-hydroxyamino acids, producing glycine and aldehydes, via a retro-aldol mechanism. This is Serine hydroxymethyltransferase from Prochlorococcus marinus (strain MIT 9312).